A 156-amino-acid polypeptide reads, in one-letter code: Transcriptional regulator MraZ (156 aa).

SpoVT-AbrB domains are found at residues 7 to 54 and 84 to 127; these read NIEV…PESV and VEVV…AKER.

Belongs to the MraZ family. Forms oligomers.

The protein localises to the cytoplasm. It is found in the nucleoid. The polypeptide is Transcriptional regulator MraZ (Bacteroides thetaiotaomicron (strain ATCC 29148 / DSM 2079 / JCM 5827 / CCUG 10774 / NCTC 10582 / VPI-5482 / E50)).